A 400-amino-acid chain; its full sequence is Cytoplasmic polyadenylated homeobox-like protein 2 (400 aa).

Positions 1–29 (MSSQAFPAEEDHHNEERQTKKKRKTKHRH) are disordered. Residues 9–18 (EEDHHNEERQ) show a composition bias toward basic and acidic residues. A compositionally biased stretch (basic residues) spans 19–29 (TKKKRKTKHRH). The homeobox DNA-binding region spans 24–83 (KTKHRHKFSEELLQELKEIFGENGYPDFTTRKTLANKFDCPVNVINNWFQNNRARLPPEE).

The protein localises to the nucleus. This is Cytoplasmic polyadenylated homeobox-like protein 2 from Homo sapiens (Human).